The sequence spans 828 residues: Periplasmic nitrate reductase (828 aa).

Positions 1–31 form a signal peptide, tat-type signal; it reads MKLSRRHFMKANAVAAAAAVAGITIPIAVRA. The 4Fe-4S Mo/W bis-MGD-type domain maps to 39 to 95; it reads IHWDKAPCRFCGVGCGVLVGTQNGRIVASQGDPEAPVNRGLNCIKGYFLPKIMYGQD. [4Fe-4S] cluster contacts are provided by Cys-46, Cys-49, Cys-53, and Cys-81. Mo-bis(molybdopterin guanine dinucleotide)-binding positions include Lys-83, Gln-150, Asn-175, Cys-179, 212–219, 243–247, 262–264, Met-372, Gln-376, Asn-482, 508–509, Lys-531, Asp-558, and 718–727; these read WGSNMAEM, STYQH, QTD, SD, and TGRVLEHWHT. Residue Phe-794 participates in substrate binding. Residues Asn-802 and Lys-819 each contribute to the Mo-bis(molybdopterin guanine dinucleotide) site.

It belongs to the prokaryotic molybdopterin-containing oxidoreductase family. NasA/NapA/NarB subfamily. In terms of assembly, component of the periplasmic nitrate reductase NapAB complex composed of NapA and NapB. [4Fe-4S] cluster is required as a cofactor. It depends on Mo-bis(molybdopterin guanine dinucleotide) as a cofactor. In terms of processing, predicted to be exported by the Tat system. The position of the signal peptide cleavage has not been experimentally proven.

Its subcellular location is the periplasm. It carries out the reaction 2 Fe(II)-[cytochrome] + nitrate + 2 H(+) = 2 Fe(III)-[cytochrome] + nitrite + H2O. Its function is as follows. Catalytic subunit of the periplasmic nitrate reductase complex NapAB. Receives electrons from NapB and catalyzes the reduction of nitrate to nitrite. The chain is Periplasmic nitrate reductase from Pectobacterium atrosepticum (strain SCRI 1043 / ATCC BAA-672) (Erwinia carotovora subsp. atroseptica).